The chain runs to 351 residues: Soluble TNF receptor II (351 aa).

Positions 1 to 19 are cleaved as a signal peptide; the sequence is MKSVLYSYILFLSCIIING. TNFR-Cys repeat units lie at residues 31–67 and 69–110; these read KCKD…NTQC and PCGS…NRIC. Disulfide bonds link cysteine 32/cysteine 43, cysteine 44/cysteine 57, cysteine 47/cysteine 67, cysteine 70/cysteine 85, cysteine 88/cysteine 102, and cysteine 92/cysteine 110. N-linked (GlcNAc...) asparagine; by host glycans are attached at residues asparagine 103, asparagine 191, and asparagine 250.

This sequence belongs to the orthopoxvirus OPG002 family.

Its subcellular location is the secreted. Its function is as follows. Inhibits host immune defense by binding to host TNF and various chemokines in the extracellular space. Binds host CC chemokines (beta chemokines) and CXC chemokines (alpha chemokines). This chain is Soluble TNF receptor II (OPG002), found in Bos taurus (Bovine).